We begin with the raw amino-acid sequence, 102 residues long: NADH-quinone oxidoreductase subunit K 2 (102 aa).

3 consecutive transmembrane segments (helical) span residues 4–24 (ITPV…TVGV), 30–50 (IVII…NLIA), and 62–82 (IFAI…LGIL).

The protein belongs to the complex I subunit 4L family. NDH-1 is composed of 14 different subunits. Subunits NuoA, H, J, K, L, M, N constitute the membrane sector of the complex.

The protein localises to the cell inner membrane. It catalyses the reaction a quinone + NADH + 5 H(+)(in) = a quinol + NAD(+) + 4 H(+)(out). In terms of biological role, NDH-1 shuttles electrons from NADH, via FMN and iron-sulfur (Fe-S) centers, to quinones in the respiratory chain. The immediate electron acceptor for the enzyme in this species is believed to be ubiquinone. Couples the redox reaction to proton translocation (for every two electrons transferred, four hydrogen ions are translocated across the cytoplasmic membrane), and thus conserves the redox energy in a proton gradient. This chain is NADH-quinone oxidoreductase subunit K 2, found in Solibacter usitatus (strain Ellin6076).